A 318-amino-acid polypeptide reads, in one-letter code: Endochitinase 1 (318 aa).

A signal peptide spans 1 to 18 (EFTTLFLLFSVLLLSASA). The Chitin-binding type-1 domain maps to 19–60 (EQCGSQAGGALCASGLCCSKFGWCGDTNDYCGPGNCQSQCPG). 7 disulfides stabilise this stretch: Cys21–Cys36, Cys30–Cys42, Cys35–Cys49, Cys54–Cys58, Cys89–Cys152, Cys164–Cys172, and Cys271–Cys303. Catalysis depends on Glu134, which acts as the Proton donor. The propeptide at 312-318 (GLLVDTM) is removed in mature form, vacuolar targeting.

The protein belongs to the glycosyl hydrolase 19 family. Chitinase class I subfamily.

It localises to the vacuole. It catalyses the reaction Random endo-hydrolysis of N-acetyl-beta-D-glucosaminide (1-&gt;4)-beta-linkages in chitin and chitodextrins.. Its function is as follows. Defense against chitin-containing fungal pathogens. This is Endochitinase 1 (CHTB1) from Solanum tuberosum (Potato).